The sequence spans 113 residues: Putative pterin-4-alpha-carbinolamine dehydratase (113 aa).

It belongs to the pterin-4-alpha-carbinolamine dehydratase family.

It carries out the reaction (4aS,6R)-4a-hydroxy-L-erythro-5,6,7,8-tetrahydrobiopterin = (6R)-L-erythro-6,7-dihydrobiopterin + H2O. In Hydrogenovibrio crunogenus (strain DSM 25203 / XCL-2) (Thiomicrospira crunogena), this protein is Putative pterin-4-alpha-carbinolamine dehydratase.